The following is a 180-amino-acid chain: Large ribosomal subunit protein uL5 (180 aa).

This sequence belongs to the universal ribosomal protein uL5 family. Part of the 50S ribosomal subunit; part of the 5S rRNA/L5/L18/L25 subcomplex. Contacts the 5S rRNA and the P site tRNA. Forms a bridge to the 30S subunit in the 70S ribosome.

Its function is as follows. This is one of the proteins that bind and probably mediate the attachment of the 5S RNA into the large ribosomal subunit, where it forms part of the central protuberance. In the 70S ribosome it contacts protein S13 of the 30S subunit (bridge B1b), connecting the 2 subunits; this bridge is implicated in subunit movement. Contacts the P site tRNA; the 5S rRNA and some of its associated proteins might help stabilize positioning of ribosome-bound tRNAs. The protein is Large ribosomal subunit protein uL5 of Rubrobacter xylanophilus (strain DSM 9941 / JCM 11954 / NBRC 16129 / PRD-1).